A 618-amino-acid polypeptide reads, in one-letter code: MPRSRGGRAAPGQASRWSGWRAPGRLLPLLPALCCLAAAAGAGKPAGADAPFAGQNWLKSYGYLLPYESRASALHSGKALQSAVSTMQQFYGIPVTGVLDQTTIEWMKKPRCGVPDHPHLSRRRRNKRYALTGQKWRQKHITYSIHNYTPKVGELDTRKAIRQAFDVWQKVTPLTFEEVPYHEIKSDRKEADIMIFFASGFHGDSSPFDGEGGFLAHAYFPGPGIGGDTHFDSDEPWTLGNANHDGNDLFLVAVHELGHALGLEHSNDPSAIMAPFYQYMETHNFKLPQDDLQGIQKIYGPPAEPLEPTRPLPTLPVRRIHSPSERKHERHPRPPRPPLGDRPSTPGAKPNICDGNFNTVALFRGEMFVFKDRWFWRLRNNRVQEGYPMQIEQFWKGLPARIDAAYERADGRFVFFKGDKYWVFKEVTVEPGYPHSLGELGSCLPREGIDTALRWEPVGKTYFFKGERYWRYSEERRATDPGYPKPITVWKGIPQAPQGAFISKEGYYTYFYKGRDYWKFDNQKLSVEPGYPRNILRDWMGCKQKEVERRKERRLPQDDVDIMVTIDDVPGSVNAVAVVVPCTLSLCLLVLLYTIFQFKNKAGPQPVTYYKRPVQEWV.

The first 41 residues, 1 to 41 (MPRSRGGRAAPGQASRWSGWRAPGRLLPLLPALCCLAAAAG), serve as a signal peptide directing secretion. Positions 42–128 (AGKPAGADAP…HLSRRRRNKR (87 aa)) are excised as a propeptide. The Extracellular portion of the chain corresponds to 42–575 (AGKPAGADAP…IDDVPGSVNA (534 aa)). A Cysteine switch motif is present at residues 110-117 (PRCGVPDH). C112 and H255 together coordinate Zn(2+). E256 is an active-site residue. Positions 259 and 265 each coordinate Zn(2+). The interval 296 to 352 (QKIYGPPAEPLEPTRPLPTLPVRRIHSPSERKHERHPRPPRPPLGDRPSTPGAKPNI) is disordered. The segment covering 302 to 314 (PAEPLEPTRPLPT) has biased composition (pro residues). Hemopexin repeat units lie at residues 350–398 (PNIC…WKGL), 399–444 (PARI…GSCL), 446–494 (REGI…KGIP), and 495–542 (QAPQ…WMGC). A disulfide bridge connects residues C353 and C542. A helical membrane pass occupies residues 576 to 596 (VAVVVPCTLSLCLLVLLYTIF). Topologically, residues 597–618 (QFKNKAGPQPVTYYKRPVQEWV) are cytoplasmic. The PDZ-binding signature appears at 616 to 618 (EWV).

The protein belongs to the peptidase M10A family. In terms of assembly, interacts with GRIP1 and GRIP2. Interacts (via PDZ-binding motif) with APBA3 (via PDZ domain). The cofactor is Zn(2+). It depends on Ca(2+) as a cofactor. Post-translationally, cleaved by a furin endopeptidase in the trans-Golgi network. In terms of tissue distribution, mainly expressed in neuronal cells of both central and peripheral nervous systems. Expressed by CGRP-containing peptidergic nociceptors in dorsal root ganglia. Expressed in adult neural stem cell and ependymocytes. Expressed at low level in testis.

It is found in the cell membrane. It localises to the golgi apparatus. The protein localises to the trans-Golgi network membrane. The protein resides in the secreted. Its subcellular location is the extracellular space. It is found in the extracellular matrix. Its function is as follows. Metalloprotease that mediates cleavage of N-cadherin (CDH2) and acts as a regulator of neuro-immune interactions and neural stem cell quiescence. Involved in cell-cell interactions between nociceptive neurites and mast cells, possibly by mediating cleavage of CDH2, thereby acting as a mediator of peripheral thermal nociception and inflammatory hyperalgesia. Key regulator of neural stem cells quiescence by mediating cleavage of CDH2, affecting CDH2-mediated anchorage of neural stem cells to ependymocytes in the adult subependymal zone, leading to modulate their quiescence. May play a role in axonal growth. Able to activate progelatinase A. May also be a proteoglycanase involved in degradation of proteoglycans, such as dermatan sulfate and chondroitin sulfate proteoglycans. Cleaves partially fibronectin, but not collagen type I, nor laminin. This is Matrix metalloproteinase-24 (Mmp24) from Mus musculus (Mouse).